The following is a 529-amino-acid chain: Berberine bridge enzyme-like 7 (529 aa).

The N-terminal stretch at 1–19 (MKEALSILCLALLVSVSEA) is a signal peptide. Cysteines 32 and 95 form a disulfide. Asparagine 52 carries an N-linked (GlcNAc...) asparagine glycan. Residues 69 to 247 (YSSPNFKKLL…LSWKINLVKV (179 aa)) form the FAD-binding PCMH-type domain. A cross-link (6-(S-cysteinyl)-8alpha-(pros-histidyl)-FAD (His-Cys)) is located at residues 110–172 (HDLEGLSYRS…QTLAFPAGVC (63 aa)). Residues asparagine 257, asparagine 341, and asparagine 439 are each glycosylated (N-linked (GlcNAc...) asparagine).

The protein belongs to the oxygen-dependent FAD-linked oxidoreductase family. FAD serves as cofactor. Post-translationally, the FAD cofactor is bound via a bicovalent 6-S-cysteinyl, 8alpha-N1-histidyl FAD linkage.

It localises to the secreted. The protein localises to the cell wall. Its function is as follows. Probable flavin-dependent oxidoreductase. This Arabidopsis thaliana (Mouse-ear cress) protein is Berberine bridge enzyme-like 7.